Reading from the N-terminus, the 195-residue chain is Envelope glycoprotein L (195 aa).

The signal sequence occupies residues Met1 to Ala25. The segment at Lys28 to Tyr157 is interaction with gH. The region spanning Lys28–Ala195 is the gL alphaherpesvirus-type domain. Cystine bridges form between Cys49–Cys78 and Cys156–Cys178.

It belongs to the herpesviridae glycoprotein L (gL) family. Alphaherpesvirinae gL subfamily. In terms of assembly, interacts with glycoprotein H (gH); this interaction is necessary for the correct processing and cell surface expression of gH. The heterodimer gH/gL seems to interact with gB trimers during fusion.

Its subcellular location is the virion membrane. It is found in the host cell membrane. The protein resides in the host Golgi apparatus. The protein localises to the host trans-Golgi network. Its function is as follows. The heterodimer glycoprotein H-glycoprotein L is required for the fusion of viral and plasma membranes leading to virus entry into the host cell. Acts as a functional inhibitor of gH and maintains gH in an inhibited form. Upon binding to host integrins, gL dissociates from gH leading to activation of the viral fusion glycoproteins gB and gH. This chain is Envelope glycoprotein L, found in Gallus gallus (Chicken).